The sequence spans 145 residues: Ponticulin-like protein B (145 aa).

The signal sequence occupies residues Met1–Gly22. N-linked (GlcNAc...) asparagine glycosylation is present at Asn34. Residues Asp107–Ala126 form a disordered region. Residues Thr108 to Ala126 show a composition bias toward low complexity. The GPI-like-anchor amidated serine moiety is linked to residue Ser117. The propeptide at Thr118–Ile145 is removed in mature form.

This sequence belongs to the ponticulin family. The GPI-like-anchor contains a phosphoceramide group, rather than a phosphatidyl group.

The protein localises to the cell membrane. In terms of biological role, binds F-actin and nucleates actin assembly. The chain is Ponticulin-like protein B (ponB) from Dictyostelium discoideum (Social amoeba).